A 152-amino-acid polypeptide reads, in one-letter code: MGRFIFMSFGLLVVAASLRGTGADCLSGWSSYEGHCYKAFEKYKTWEDAERVCTEQAKGAHLVSIESSGEADFVAQLVTQNMKRLDFYIWIGLRVQGKVKQCNSEWSDGSSVSYENWIEAESKTCLGLEKETDFRKWVNIYCGQQNPFVCEA.

An N-terminal signal peptide occupies residues 1 to 23 (MGRFIFMSFGLLVVAASLRGTGA). In terms of domain architecture, C-type lectin spans 24-152 (DCLSGWSSYE…GQQNPFVCEA (129 aa)). 3 disulfides stabilise this stretch: Cys25–Cys36, Cys53–Cys150, and Cys125–Cys142. Ca(2+) is bound by residues Ser64, Glu66, and Glu70. Residue Glu151 coordinates Ca(2+).

It belongs to the snaclec family. As to quaternary structure, heterodimer of subunits A and B; disulfide-linked. As to expression, expressed by the venom gland.

It is found in the secreted. In terms of biological role, anticoagulant protein which binds to the gamma-carboxyglutamic acid-domain regions of factors IX (F9) and factor X (F10) in the presence of calcium with a 1 to 1 stoichiometry. This chain is Snaclec coagulation factor IX/factor X-binding protein subunit A, found in Protobothrops flavoviridis (Habu).